Consider the following 293-residue polypeptide: Nucleotide-binding protein BcerKBAB4_4948 (293 aa).

Residue 14–21 (GMSGAGKT) participates in ATP binding. GTP is bound at residue 65 to 68 (DLRG).

Belongs to the RapZ-like family.

Its function is as follows. Displays ATPase and GTPase activities. The protein is Nucleotide-binding protein BcerKBAB4_4948 of Bacillus mycoides (strain KBAB4) (Bacillus weihenstephanensis).